The following is a 713-amino-acid chain: tRNA 5-methylaminomethyl-2-thiouridine biosynthesis bifunctional protein MnmC (713 aa).

Residues 1-300 (MTAEPNKPCQ…MAAILSSATP (300 aa)) are tRNA (mnm(5)s(2)U34)-methyltransferase. Residues 306–713 (IGGGLASAHL…LRKLLKGKAL (408 aa)) form an FAD-dependent cmnm(5)s(2)U34 oxidoreductase region.

In the N-terminal section; belongs to the methyltransferase superfamily. tRNA (mnm(5)s(2)U34)-methyltransferase family. The protein in the C-terminal section; belongs to the DAO family. FAD is required as a cofactor.

The protein resides in the cytoplasm. The enzyme catalyses 5-aminomethyl-2-thiouridine(34) in tRNA + S-adenosyl-L-methionine = 5-methylaminomethyl-2-thiouridine(34) in tRNA + S-adenosyl-L-homocysteine + H(+). Catalyzes the last two steps in the biosynthesis of 5-methylaminomethyl-2-thiouridine (mnm(5)s(2)U) at the wobble position (U34) in tRNA. Catalyzes the FAD-dependent demodification of cmnm(5)s(2)U34 to nm(5)s(2)U34, followed by the transfer of a methyl group from S-adenosyl-L-methionine to nm(5)s(2)U34, to form mnm(5)s(2)U34. The sequence is that of tRNA 5-methylaminomethyl-2-thiouridine biosynthesis bifunctional protein MnmC from Shewanella baltica (strain OS155 / ATCC BAA-1091).